Here is a 573-residue protein sequence, read N- to C-terminus: DNA ligase (573 aa).

Residue Glu-248 coordinates ATP. Lys-250 acts as the N6-AMP-lysine intermediate in catalysis. Residues Arg-255, Arg-270, Glu-299, Phe-340, Arg-432, and Lys-438 each coordinate ATP.

Belongs to the ATP-dependent DNA ligase family. Requires Mg(2+) as cofactor.

The enzyme catalyses ATP + (deoxyribonucleotide)n-3'-hydroxyl + 5'-phospho-(deoxyribonucleotide)m = (deoxyribonucleotide)n+m + AMP + diphosphate.. In terms of biological role, DNA ligase that seals nicks in double-stranded DNA during DNA replication, DNA recombination and DNA repair. The polypeptide is DNA ligase (Methanocaldococcus jannaschii (strain ATCC 43067 / DSM 2661 / JAL-1 / JCM 10045 / NBRC 100440) (Methanococcus jannaschii)).